The primary structure comprises 289 residues: MDIRFKQVDFTYQPNTPFEQRALFDINLTIQDGSYTAIVGHTGSGKSTLLQHLNALVKPTKGQVTIGERVITPETDNKNLKPIRKKVGIVFQFPEAQLFEETVERDIAFGPKNFGVSDEEAKKLAKKMLDLVGLDEKYLQHSPFELSGGQMRRVAIAGVLAMEPEVLVLDEPTAGLDPKGRKEMMEMFSRLHKEHNMTIVLVTHLMDDVANYADHVIVLEKGQIVRAGAPQEVFQETQWLKEKQLGVPTAAEFAEKLVAKGFSFEQLPLTADQLADQLLKKMQEAGEAK.

One can recognise an ABC transporter domain in the interval isoleucine 3–glycine 246. Glycine 40–serine 47 contacts ATP.

It belongs to the ABC transporter superfamily. Energy-coupling factor EcfA family. Forms a stable energy-coupling factor (ECF) transporter complex composed of 2 membrane-embedded substrate-binding proteins (S component), 2 ATP-binding proteins (A component) and 2 transmembrane proteins (T component).

The protein resides in the cell membrane. Its function is as follows. ATP-binding (A) component of a common energy-coupling factor (ECF) ABC-transporter complex. Unlike classic ABC transporters this ECF transporter provides the energy necessary to transport a number of different substrates. The protein is Energy-coupling factor transporter ATP-binding protein EcfA2 of Enterococcus faecalis (strain ATCC 700802 / V583).